Consider the following 555-residue polypeptide: Suppressor of tumorigenicity 7 protein-like (555 aa).

Transmembrane regions (helical) follow at residues 32–52 (APWA…YAAL), 76–96 (FYFA…VFEW), 504–524 (LPFF…LALL), and 531–551 (LMVV…APSV).

It belongs to the ST7 family.

Its subcellular location is the membrane. The protein is Suppressor of tumorigenicity 7 protein-like (ST7L) of Gallus gallus (Chicken).